The chain runs to 349 residues: Zinc-type alcohol dehydrogenase-like protein PB24D3.08c (349 aa).

This sequence belongs to the zinc-containing alcohol dehydrogenase family. Quinone oxidoreductase subfamily.

The protein resides in the cytoplasm. The protein localises to the nucleus. The polypeptide is Zinc-type alcohol dehydrogenase-like protein PB24D3.08c (Schizosaccharomyces pombe (strain 972 / ATCC 24843) (Fission yeast)).